We begin with the raw amino-acid sequence, 2034 residues long: Pecanex-like protein 3 (2034 aa).

2 helical membrane passes run 33–53 (CFHL…YMVL) and 54–74 (PPSL…FATI). A disordered region spans residues 96-118 (STMGELEEEPAQGDSNPPRDPGV). Ser-127 is modified (phosphoserine). Position 129 is a phosphothreonine (Thr-129). Disordered regions lie at residues 193–242 (IGDL…PLLK), 260–517 (DRAL…LRPP), and 540–625 (VLPA…SHSR). Polar residues predominate over residues 294-303 (KAGSSDSCFS). The segment covering 305-319 (TDRETLSSFKSEKTN) has biased composition (basic and acidic residues). The N-linked (GlcNAc...) asparagine glycan is linked to Asn-319. Residue Thr-370 is modified to Phosphothreonine. Residues 391–409 (PSKRQPPLRRHSPPGRAPR) are compositionally biased toward basic residues. Ser-392 and Ser-431 each carry phosphoserine. Residues 427–436 (GSELSPASSL) show a composition bias toward polar residues. The segment covering 444 to 460 (TDSSSSTSCYSPESSRG) has biased composition (low complexity). Over residues 488–497 (TQRTPSTASA) the composition is skewed to polar residues. Ser-505 carries the phosphoserine modification. Helical transmembrane passes span 790-812 (VLEN…LLLL), 819-836 (IWVF…YSLL), 852-872 (WVIA…IWLL), 880-900 (PFPP…FFCA), 903-923 (VATV…LPQV), 946-968 (SPLT…YGFC), and 980-1000 (HVPV…YHLS). The residue at position 1025 (Ser-1025) is a Phosphoserine. The next 4 membrane-spanning stretches (helical) occupy residues 1053–1073 (LVMC…TVFI), 1078–1098 (VLGF…HYLL), 1244–1264 (FVLT…HAFA), and 1280–1300 (LLSG…VFIM). Ser-1697 carries the post-translational modification Phosphoserine. A glycan (N-linked (GlcNAc...) asparagine) is linked at Asn-1770. The disordered stretch occupies residues 1844-2034 (GGLTSLSNNP…AAQPLLEHQY (191 aa)). Over residues 1890–1910 (RPPPLLQWPPPRLPGPPPASP) the composition is skewed to pro residues. Ser-1909 is modified (phosphoserine). Residues 1925-1939 (GLLSSEGPSGKWSLG) are compositionally biased toward low complexity. Phosphoserine is present on Ser-1955. Residues 1969-1978 (LSLSLSLSLS) show a composition bias toward low complexity.

This sequence belongs to the pecanex family.

The protein resides in the membrane. This is Pecanex-like protein 3 from Homo sapiens (Human).